A 350-amino-acid chain; its full sequence is Twinfilin-1 (350 aa).

Ser2 carries the N-acetylserine modification. In terms of domain architecture, ADF-H 1 spans 2–139; the sequence is SHQTGIQASE…SLHGYKKYLL (138 aa). Phosphoserine is present on residues Ser143 and Ser277. The region spanning 175-313 is the ADF-H 2 domain; sequence LQGVAFPISR…TADFLYDEVH (139 aa). Tyr309 is modified (phosphotyrosine). Residues 317–350 are disordered; that stretch reads HAHKQSFAKPKGPAGKRGIRRLIRGPAEAEATTD. Residue Thr349 is modified to Phosphothreonine.

It belongs to the actin-binding proteins ADF family. Twinfilin subfamily. In terms of assembly, interacts with G-actin; ADP-actin form and capping protein (CP). May also be able to interact with TWF2 and phosphoinositides, PI(4,5)P2. When bound to PI(4,5)P2, it is down-regulated. Interacts with ACTG1. Phosphorylated on serine and threonine residues. In terms of tissue distribution, widely expressed with highest levels in brain, liver and kidney. Also expressed in heart, lung and testis. Not detected in spleen or skeletal muscle.

It is found in the cytoplasm. The protein resides in the cytoskeleton. Actin-binding protein involved in motile and morphological processes. Inhibits actin polymerization, likely by sequestering G-actin. By capping the barbed ends of filaments, it also regulates motility. Seems to play an important role in clathrin-mediated endocytosis and distribution of endocytic organelles. This Mus musculus (Mouse) protein is Twinfilin-1 (Twf1).